The chain runs to 236 residues: MTEITQLFQYNTLGALMAGLYEGTMTIGELLKHGDLGIGTLDSVDGELIVLDGKAYQAKGDKTIVELTDDIKVPYAAVVPHQAEVVFKQKFTASDKELEDRIESYFDGQNLFRSIKITGEFPKMHVRMIPRAKSGTRFVEVSQNQPEYTEENVKGTIVGIWTPEMFHGVSVAGYHLHFISEDFTFGGHVLDFIIDNGTVEIGAIDQLNQSFPVQDRKFLFADLDIEALKKDIDVAE.

Belongs to the alpha-acetolactate decarboxylase family.

It carries out the reaction (2S)-2-acetolactate + H(+) = (R)-acetoin + CO2. The protein operates within polyol metabolism; (R,R)-butane-2,3-diol biosynthesis; (R,R)-butane-2,3-diol from pyruvate: step 2/3. Its function is as follows. Converts acetolactate into acetoin. The polypeptide is Alpha-acetolactate decarboxylase (aldB) (Lactococcus lactis subsp. lactis (strain IL1403) (Streptococcus lactis)).